The sequence spans 199 residues: Protein GrpE (199 aa).

Residues 1–10 (MTNQTEKEQV) are compositionally biased toward basic and acidic residues. The interval 1 to 44 (MTNQTEKEQVEQDVSQATELAQEAQEAQTQDVEPELQQNNEIDP) is disordered. Positions 16-30 (QATELAQEAQEAQTQ) are enriched in low complexity.

The protein belongs to the GrpE family. In terms of assembly, homodimer.

It is found in the cytoplasm. In terms of biological role, participates actively in the response to hyperosmotic and heat shock by preventing the aggregation of stress-denatured proteins, in association with DnaK and GrpE. It is the nucleotide exchange factor for DnaK and may function as a thermosensor. Unfolded proteins bind initially to DnaJ; upon interaction with the DnaJ-bound protein, DnaK hydrolyzes its bound ATP, resulting in the formation of a stable complex. GrpE releases ADP from DnaK; ATP binding to DnaK triggers the release of the substrate protein, thus completing the reaction cycle. Several rounds of ATP-dependent interactions between DnaJ, DnaK and GrpE are required for fully efficient folding. In Glaesserella parasuis serovar 5 (strain SH0165) (Haemophilus parasuis), this protein is Protein GrpE.